The following is a 171-amino-acid chain: Adenine phosphoribosyltransferase (171 aa).

This sequence belongs to the purine/pyrimidine phosphoribosyltransferase family. As to quaternary structure, homodimer.

It localises to the cytoplasm. It catalyses the reaction AMP + diphosphate = 5-phospho-alpha-D-ribose 1-diphosphate + adenine. Its pathway is purine metabolism; AMP biosynthesis via salvage pathway; AMP from adenine: step 1/1. Catalyzes a salvage reaction resulting in the formation of AMP, that is energically less costly than de novo synthesis. This Geotalea daltonii (strain DSM 22248 / JCM 15807 / FRC-32) (Geobacter daltonii) protein is Adenine phosphoribosyltransferase.